The primary structure comprises 99 residues: CLAVATA3/ESR (CLE)-related protein 41 (99 aa).

The signal sequence occupies residues 1–34 (MATSNDQTNTKSSHSRTLLLLFIFLSLLLFSSLT). The tract at residues 60–99 (ASSTMDLRPKASTRRSRTSRRREFGNDAHEVPSGPNPISN) is disordered. Over residues 70-79 (ASTRRSRTSR) the composition is skewed to basic residues. Basic and acidic residues predominate over residues 80-89 (RREFGNDAHE). 2 positions are modified to hydroxyproline: Pro91 and Pro94. Residue Pro94 is glycosylated (O-linked (Ara...) hydroxyproline).

Belongs to the CLV3/ESR signal peptide family. CLE41p interacts specifically with the leucine-rich repeat receptor-like protein kinase TDR. The O-glycosylation (arabinosylation) of the hydroxyproline Pro-94 enhances binding affinity of the CLE41p peptide for its receptor. As to expression, mostly expressed in inflorescence and roots, and, to a lower extent, in seedlings, flowers, leaves and siliques. Observed along the vascular strands in cotyledons, leaves and roots, but not in shoot apical meristems (SAM). Restricted to the phloem and the neighboring pericycle cells in the roots and hypocotyls.

The protein resides in the secreted. The protein localises to the extracellular space. Functionally, extracellular signal peptide that regulates cell fate. May act with TDR as a ligand-receptor pair in a signal transduction pathway that represses tracheary element differentiation but promotes the formation of procambial cells adjacent to phloem cells in the veins in an auxin-dependent manner. Regulates the transition of protophloem cells from proliferation to differentiation, thus impinging on postembryonic growth capacity of the root meristem; this signaling pathway requires CRN and CLV2. In Arabidopsis thaliana (Mouse-ear cress), this protein is CLAVATA3/ESR (CLE)-related protein 41.